Reading from the N-terminus, the 314-residue chain is Olfactory receptor 9A4 (314 aa).

The Extracellular portion of the chain corresponds to 1-24; the sequence is MLMNYSSATEFYLLGFPGSEELHH. Asn4 is a glycosylation site (N-linked (GlcNAc...) asparagine). A helical membrane pass occupies residues 25-45; that stretch reads ILFAIFFFFYLVTLMGNTVII. Topologically, residues 46–53 are cytoplasmic; the sequence is MIVCVDKR. The helical transmembrane segment at 54-74 threads the bilayer; that stretch reads LQSPMYFFLGHLSALEILVTT. Over 75 to 99 the chain is Extracellular; it reads IIVPVMLWGLLLPGMQTIYLSACVV. Cys97 and Cys189 are disulfide-bonded. Residues 100–120 traverse the membrane as a helical segment; sequence QLFLYLAVGTTEFALLGAMAV. Topologically, residues 121-139 are cytoplasmic; that stretch reads DRYVAVCNPLRYNIIMNRH. The chain crosses the membrane as a helical span at residues 140–160; sequence TCNFVVLVSWVFGFLFQIWPV. The Extracellular segment spans residues 161–197; the sequence is YVMFQLTYCKSNVVNNFFCDRGQLLKLSCNNTLFTEF. N-linked (GlcNAc...) asparagine glycosylation occurs at Asn190. A helical transmembrane segment spans residues 198–217; sequence ILFLMAVFVLFGSLIPTIVS. Over 218–237 the chain is Cytoplasmic; that stretch reads NAYIISTILKIPSSSGRRKS. A helical transmembrane segment spans residues 238–258; the sequence is FSTCASHFTCVVIGYGSCLFL. Over 259–271 the chain is Extracellular; the sequence is YVKPKQTQAADYN. The chain crosses the membrane as a helical span at residues 272-292; the sequence is WVVSLMVSVVTPFLNPFIFTL. The Cytoplasmic segment spans residues 293-314; sequence RNDKVIEALRDGVKRCCQLFRN.

This sequence belongs to the G-protein coupled receptor 1 family.

Its subcellular location is the cell membrane. Its function is as follows. Odorant receptor. The protein is Olfactory receptor 9A4 (OR9A4) of Homo sapiens (Human).